Reading from the N-terminus, the 445-residue chain is MNSPLSSKNLRIFSKSVACKCLVLVGIALFYRALLLSYSPRNALSNSLLFRDRHMSDSSSTGGIRTDKFLEVPQIVWGLNNQKIAFARACLTARMMNRTLLMPSLSASLFYKEVDKLRPIPFDKVFQFERFNSLCSGFVRLSRFSDVKNRAQVFDLEKGSGRRWTVERDLEHLKQSARNESIDEFEVIRLIGKNPFLWHDHWPVEDYAKVFECMVVVDEISREADKVVMKIREAGEAERAKLASKTEILGPVPFVAVHMRIEIDWMIHCKKLEQRKKISEICSSKREILDRVGNISGLKTPTVLYLAVADTLLEEKEEDSSVLSGWRDGLIPFEKKKLGVKEEIYGKYSYLIQSAIDYEVCLRADVFVGNSFSTFSSLIVLERTQKARRLGFMSSCKDGGNKWRSYAYNLAGESNGVPRRWMTNMTHSSLQAISYGSNSVSCSSG.

A helical; Signal-anchor for type II membrane protein transmembrane segment spans residues isoleucine 12–leucine 34. Residues asparagine 97 and asparagine 179 are each glycosylated (N-linked (GlcNAc...) asparagine). Substrate is bound at residue histidine 258 to arginine 260. Asparagine 294 carries N-linked (GlcNAc...) asparagine glycosylation. Threonine 374–phenylalanine 375 serves as a coordination point for substrate. The N-linked (GlcNAc...) asparagine glycan is linked to asparagine 424.

It belongs to the glycosyltransferase GT106 family. Expressed in dry pollen grains and germinating pollen grains.

The protein resides in the golgi apparatus membrane. It functions in the pathway glycan metabolism. Probable protein O-fucosyltransferase required for correct pollen tube penetration through the stigma-style interface. May be involved in protein O-glycosylation events during pollen-pistil interactions. The polypeptide is O-fucosyltransferase 23 (Arabidopsis thaliana (Mouse-ear cress)).